We begin with the raw amino-acid sequence, 753 residues long: Protein transport protein SEC23-1 (753 aa).

Residues cysteine 56, cysteine 61, cysteine 80, and cysteine 83 each coordinate Zn(2+).

This sequence belongs to the SEC23/SEC24 family. SEC23 subfamily. The COPII coat is composed of at least 5 proteins: the SEC23/24 complex, the SEC13/31 complex, and the protein SAR1.

It is found in the cytoplasm. The protein resides in the cytoplasmic vesicle. The protein localises to the COPII-coated vesicle membrane. Its subcellular location is the endoplasmic reticulum membrane. It localises to the golgi apparatus membrane. Component of the coat protein complex II (COPII) which promotes the formation of transport vesicles from the endoplasmic reticulum (ER). The coat has two main functions, the physical deformation of the endoplasmic reticulum membrane into vesicles and the selection of cargo molecules. The chain is Protein transport protein SEC23-1 (SEC231) from Candida glabrata (strain ATCC 2001 / BCRC 20586 / JCM 3761 / NBRC 0622 / NRRL Y-65 / CBS 138) (Yeast).